The sequence spans 354 residues: Phospho-N-acetylmuramoyl-pentapeptide-transferase (354 aa).

Helical transmembrane passes span 23–43, 66–86, 88–108, 138–158, 161–181, 193–213, 227–247, 257–277, 282–302, and 331–351; these read IAFF…IAWA, TPTM…LLCS, LTNT…FIGF, FALS…FIPF, YALF…ITAS, GLAS…VYLC, VVGV…ILGF, VFMG…TGVV, ILLI…ILQV, and KIIV…LTTL.

It belongs to the glycosyltransferase 4 family. MraY subfamily. Mg(2+) serves as cofactor.

It localises to the cell inner membrane. The enzyme catalyses UDP-N-acetyl-alpha-D-muramoyl-L-alanyl-gamma-D-glutamyl-meso-2,6-diaminopimeloyl-D-alanyl-D-alanine + di-trans,octa-cis-undecaprenyl phosphate = di-trans,octa-cis-undecaprenyl diphospho-N-acetyl-alpha-D-muramoyl-L-alanyl-D-glutamyl-meso-2,6-diaminopimeloyl-D-alanyl-D-alanine + UMP. It participates in cell wall biogenesis; peptidoglycan biosynthesis. In terms of biological role, catalyzes the initial step of the lipid cycle reactions in the biosynthesis of the cell wall peptidoglycan: transfers peptidoglycan precursor phospho-MurNAc-pentapeptide from UDP-MurNAc-pentapeptide onto the lipid carrier undecaprenyl phosphate, yielding undecaprenyl-pyrophosphoryl-MurNAc-pentapeptide, known as lipid I. This chain is Phospho-N-acetylmuramoyl-pentapeptide-transferase, found in Campylobacter hominis (strain ATCC BAA-381 / DSM 21671 / CCUG 45161 / LMG 19568 / NCTC 13146 / CH001A).